A 111-amino-acid chain; its full sequence is Ribonuclease P protein component (111 aa).

Belongs to the RnpA family. In terms of assembly, consists of a catalytic RNA component (M1 or rnpB) and a protein subunit.

It catalyses the reaction Endonucleolytic cleavage of RNA, removing 5'-extranucleotides from tRNA precursor.. RNaseP catalyzes the removal of the 5'-leader sequence from pre-tRNA to produce the mature 5'-terminus. It can also cleave other RNA substrates such as 4.5S RNA. The protein component plays an auxiliary but essential role in vivo by binding to the 5'-leader sequence and broadening the substrate specificity of the ribozyme. The protein is Ribonuclease P protein component of Clostridium botulinum (strain Okra / Type B1).